Here is a 417-residue protein sequence, read N- to C-terminus: Cysteate synthase (417 aa).

Lys-102 carries the post-translational modification N6-(pyridoxal phosphate)lysine. The pyridoxal 5'-phosphate site is built by Asn-128 and Thr-380.

It belongs to the threonine synthase family. Cysteate synthase subfamily. As to quaternary structure, homotrimer. Requires pyridoxal 5'-phosphate as cofactor.

The catalysed reaction is O-phospho-L-serine + sulfite + H(+) = L-cysteate + phosphate. It functions in the pathway cofactor biosynthesis; coenzyme M biosynthesis. Specifically catalyzes the beta-elimination of phosphate from L-phosphoserine and the beta-addition of sulfite to the dehydroalanine intermediate to produce L-cysteate. In Methanocella arvoryzae (strain DSM 22066 / NBRC 105507 / MRE50), this protein is Cysteate synthase.